A 66-amino-acid chain; its full sequence is Large ribosomal subunit protein bL31 (66 aa).

Zn(2+)-binding residues include C16, C18, C36, and C39.

The protein belongs to the bacterial ribosomal protein bL31 family. Type A subfamily. Part of the 50S ribosomal subunit. Zn(2+) is required as a cofactor.

In terms of biological role, binds the 23S rRNA. The polypeptide is Large ribosomal subunit protein bL31 (Geobacter metallireducens (strain ATCC 53774 / DSM 7210 / GS-15)).